Consider the following 76-residue polypeptide: Esculentin-2SN1 (76 aa).

An N-terminal signal peptide occupies residues 1 to 22 (MFTMKKSLLFLFFLGTISLSLC). A propeptide spanning residues 23–37 (EQERGADEDDGGEEV) is cleaved from the precursor. Cysteines 70 and 76 form a disulfide.

The protein belongs to the frog skin active peptide (FSAP) family. Esculentin subfamily. As to expression, expressed by the skin glands.

The protein resides in the secreted. Its function is as follows. Antimicrobial peptide. Active against some Gram-negative and a variety of Gram-positive bacterial strains. Not active against fungi. Shows very weak hemolytic activity against human erythrocytes. This is Esculentin-2SN1 from Sylvirana spinulosa (Fine-spined frog).